The sequence spans 279 residues: uncharacterized protein (279 aa).

It belongs to the peptidase C59 family.

This is an uncharacterized protein from Chlorella (PBCV-1).